Reading from the N-terminus, the 239-residue chain is DNA repair protein RecO (239 aa).

The protein belongs to the RecO family.

Involved in DNA repair and RecF pathway recombination. This chain is DNA repair protein RecO, found in Bifidobacterium animalis subsp. lactis (strain AD011).